Here is a 205-residue protein sequence, read N- to C-terminus: MKIINILFCLLLIVLNSCNANDNDTFNNNSVQQTKSRKKRDLSQKELLQQEKITLTSDEEKMFTSLVTAFKYTVEKLSGDTNGCNNENKNKCTGFFDWLSEDIQKQKELAGAFTKVYNFLKSKAQNEAFDTYIKGAIDCKKTLHKIVIIITNMEKVRTKRAYFRGVAGSIFTDNNDNDGIYKCLKDELLNDTSNHYEGLTSDWDN.

A signal peptide spans 1–17 (MKIINILFCLLLIVLNS). Cys18 is lipidated: N-palmitoyl cysteine. Cys18 is lipidated: S-diacylglycerol cysteine.

It belongs to the Multicopy lipoprotein (Mlp) family.

The protein localises to the cell outer membrane. In terms of biological role, an outer membrane protein that may participate in pathogenesis. Some human Lyme disease patients have antibodies against this protein. The Mlp proteins probably undergo intragenic recombination, generating new alleles. This Borreliella burgdorferi (strain ATCC 35210 / DSM 4680 / CIP 102532 / B31) (Borrelia burgdorferi) protein is Lipoprotein MlpB.